A 433-amino-acid chain; its full sequence is 26S proteasome regulatory subunit 7 (433 aa).

Residues 1–22 (MPDYLGADQRKTKEDEKDDKPI) are disordered. Residues 8-22 (DQRKTKEDEKDDKPI) show a composition bias toward basic and acidic residues. Lys116 is modified (N6-acetyllysine). Residue 216 to 223 (GPPGTGKT) participates in ATP binding. At Lys422 the chain carries N6-acetyllysine.

This sequence belongs to the AAA ATPase family. Component of the 19S proteasome regulatory particle complex. The 26S proteasome consists of a 20S core particle (CP) and two 19S regulatory subunits (RP). The regulatory particle is made of a lid composed of 9 subunits, a base containing 6 ATPases including PSMC2 and few additional components. Interacts with NDC80 and SQSTM1. Interacts with PAAF1. Interacts with TRIM5. Post-translationally, monoubiquitinated by RNF181. In terms of processing, phosphorylated. Dephosphorylated by UBLCP1 which impairs PSMC2 ATPase activity and disrupts 26S proteasome assembly.

It is found in the cytoplasm. Its function is as follows. Component of the 26S proteasome, a multiprotein complex involved in the ATP-dependent degradation of ubiquitinated proteins. This complex plays a key role in the maintenance of protein homeostasis by removing misfolded or damaged proteins, which could impair cellular functions, and by removing proteins whose functions are no longer required. Therefore, the proteasome participates in numerous cellular processes, including cell cycle progression, apoptosis, or DNA damage repair. PSMC2 belongs to the heterohexameric ring of AAA (ATPases associated with diverse cellular activities) proteins that unfolds ubiquitinated target proteins that are concurrently translocated into a proteolytic chamber and degraded into peptides. This Rattus norvegicus (Rat) protein is 26S proteasome regulatory subunit 7 (Psmc2).